The chain runs to 582 residues: Multicopper oxidase LPR1 homolog 1 (582 aa).

Positions 1–20 are cleaved as a signal peptide; sequence MRAKVELAVLLLVLVGVAAG. Cu cation-binding residues include His-150, His-152, His-198, and His-200. N-linked (GlcNAc...) asparagine glycans are attached at residues Asn-256, Asn-300, and Asn-308. Residues 285–354 form the Plastocyanin-like domain; it reads PFLAVARRRY…DVVVDFSQST (70 aa). Residues His-467, His-470, and His-472 each coordinate Cu cation. N-linked (GlcNAc...) asparagine glycosylation is present at Asn-504. 5 residues coordinate Cu cation: His-563, Cys-564, His-565, His-569, and Met-574.

Belongs to the multicopper oxidase family. Requires Cu cation as cofactor. In terms of tissue distribution, highly expressed in roots, and at lower levels in basal stems and leaf blades.

It localises to the endoplasmic reticulum membrane. Multicopper oxidase that may play a role in the maintenance of inorganic phosphate homeostasis. In Oryza sativa subsp. japonica (Rice), this protein is Multicopper oxidase LPR1 homolog 1.